The primary structure comprises 561 residues: MKYIIMQDVFFIVLLLVLAIPLGIYMYKVMIGERVFLSRVLEPVERFGYRLMGVSEAGMSAKRYAGSVLAFSAIGFVFVMAVLMLQGFLPLNPQGMKGLSFSLAFNTAASFVSNTNWQAYSGESTLSYFSQSVGLTVQNFVSAATGIAVLFAVIRGFIWKKQKTVGNFWQDLFRVTLYILLPLSLVLAILLVSQGVVQSFADYSVVETLENGAKQLIPLGPAASQIAIKQLGTNGGGFFGANSAFPFENPSSFTNLIEMLAILLIPVALVVMFGRAVKDSKQGRAIMTAMMIVFVVGIVAITISEQFAGPSYQGVATSGSMEGKEVRFGVGGSSLFAASTTAASNGAVNAMHDSLTPLGGLVPMFFMQLGEVIFGGVGSGLYGMIGFIILTVFIAGLLVGRTPEYLGKKIEPYDMKMVCLLILVPPLLTLFGTAFAVMMPSVQASVAASGAHGFSEVLYAFTSMGNNNGSAFAGFAADTTFTNMVGALMMLFARFIPLIAALYLAQNMAGKSPVAASSGTLSTKNGMFIGLLIGVVVLVGALSFLPALALGPIADFFTTFK.

Transmembrane regions (helical) follow at residues 4–24 (IIMQDVFFIVLLLVLAIPLGI), 65–85 (AGSVLAFSAIGFVFVMAVLML), 134–154 (GLTVQNFVSAATGIAVLFAVI), 177–197 (LYILLPLSLVLAILLVSQGVV), 253–273 (FTNLIEMLAILLIPVALVVMF), 285–305 (AIMTAMMIVFVVGIVAITISE), 380–400 (GLYGMIGFIILTVFIAGLLVG), 417–437 (MVCLLILVPPLLTLFGTAFAV), 484–504 (MVGALMMLFARFIPLIAALYL), and 528–548 (FIGLLIGVVVLVGALSFLPAL).

It belongs to the KdpA family. In terms of assembly, the system is composed of three essential subunits: KdpA, KdpB and KdpC.

It is found in the cell membrane. Part of the high-affinity ATP-driven potassium transport (or Kdp) system, which catalyzes the hydrolysis of ATP coupled with the electrogenic transport of potassium into the cytoplasm. This subunit binds the extracellular potassium ions and delivers the ions to the membrane domain of KdpB through an intramembrane tunnel. The chain is Potassium-transporting ATPase potassium-binding subunit from Listeria welshimeri serovar 6b (strain ATCC 35897 / DSM 20650 / CCUG 15529 / CIP 8149 / NCTC 11857 / SLCC 5334 / V8).